The following is a 183-amino-acid chain: MSRIGKLPITVPKGVTVKLEGDNLLTVKGTKGTLSKKFNKDMIIKVEADQIVVQRPSDLKIYKSLHGLTRTLINNMVEGVTNGFQKTLEINGVGYRAQKQGKKLVLTLGYSHPVEMEDPEGIATEVPAPNKIIVKGIDKQVVGEVAAKIREKRLPEPYKGKGIKYETEVIRRKEGKTGGKGKK.

The protein belongs to the universal ribosomal protein uL6 family. Part of the 50S ribosomal subunit.

Its function is as follows. This protein binds to the 23S rRNA, and is important in its secondary structure. It is located near the subunit interface in the base of the L7/L12 stalk, and near the tRNA binding site of the peptidyltransferase center. In Ruminiclostridium cellulolyticum (strain ATCC 35319 / DSM 5812 / JCM 6584 / H10) (Clostridium cellulolyticum), this protein is Large ribosomal subunit protein uL6.